The chain runs to 426 residues: Phosphoribosylamine--glycine ligase (426 aa).

An ATP-grasp domain is found at 109–312 (KEVMEAAGVA…LAGVLNAVAT (204 aa)). 138 to 193 (LDYFGPMYVVKDDGLAAGKGVVVTADRAEARQHIHLVHAAGNPVLLESFLDGPEVS) provides a ligand contact to ATP. The Mg(2+) site is built by Glu-282 and Asn-284.

It belongs to the GARS family. Mg(2+) is required as a cofactor. The cofactor is Mn(2+).

The enzyme catalyses 5-phospho-beta-D-ribosylamine + glycine + ATP = N(1)-(5-phospho-beta-D-ribosyl)glycinamide + ADP + phosphate + H(+). It participates in purine metabolism; IMP biosynthesis via de novo pathway; N(1)-(5-phospho-D-ribosyl)glycinamide from 5-phospho-alpha-D-ribose 1-diphosphate: step 2/2. The polypeptide is Phosphoribosylamine--glycine ligase (Corynebacterium ammoniagenes (Brevibacterium ammoniagenes)).